A 323-amino-acid chain; its full sequence is Replication factor C subunit 4 (323 aa).

ATP-binding positions include Val-12, Val-24, 49-57, Asn-145, and Arg-203; that span reads GMPGIGKTT.

This sequence belongs to the activator 1 small subunits family. As to quaternary structure, replication factor C (RFC) is a heteropentamer of subunits RFC1, RFC2, RFC3, RFC4 and RFC5 and forms a complex with POL30/PCNA in the presence of ATP. Component of the RAD24-RFC complex which consists of RAD14, RFC2, RFC3, RFC4 and RFC5 and associates with the checkpoint clamp DDC1:MEC3:RAD17 complex. Component of the ELG1-RFC complex which consists of ELG1, RFC2, RFC3, RFC4 and RFC5. Component of the CTF18-RFC complex, which consists of CTF18, CTF8, DCC1, RFC2, RFC3, RFC4 and RFC5. RFC4 interacts with ECO1.

It is found in the nucleus. Functionally, component of ATP-dependent clamp loader (RFC and RFC-like) complexes for DNA clamps, such as the POL30/PCNA homotrimer and the checkpoint clamp DDC1:MEC3:RAD17 complex. During a clamp loading circle, the RFC:clamp complex binds to DNA and the recognition of the double-stranded/single-stranded junction stimulates ATP hydrolysis by RFC. The complex presumably provides bipartite ATP sites in which one subunit supplies a catalytic site for hydrolysis of ATP bound to the neighboring subunit. Dissociation of RFC from the clamp leaves the clamp encircling DNA. Component of the replication factor C (RFC or activator 1) complex which loads POL30/PCNA and acts during elongation of primed DNA templates by DNA polymerase delta and epsilon. RFC has an essential but redundant activity in sister chromatid cohesion establishment. Component of the RFC-like complex CTF18-RFC which is required for efficient establishment of chromosome cohesion during S-phase and may load or unload POL30/PCNA. Component of the RFC-like RAD24-RFC complex which loads the checkpoint clamp DDC1:MEC3:RAD17 complex and is involved in DNA repair pathways. Component of the RFC-like ELG1-RFC complex which appears to have a role in DNA replication, replication fork re-start, recombination and repair. The sequence is that of Replication factor C subunit 4 (RFC4) from Saccharomyces cerevisiae (strain ATCC 204508 / S288c) (Baker's yeast).